Reading from the N-terminus, the 188-residue chain is Nicotinamide-nucleotide adenylyltransferase (188 aa).

Belongs to the archaeal NMN adenylyltransferase family.

Its subcellular location is the cytoplasm. It catalyses the reaction beta-nicotinamide D-ribonucleotide + ATP + H(+) = diphosphate + NAD(+). It participates in cofactor biosynthesis; NAD(+) biosynthesis; NAD(+) from nicotinamide D-ribonucleotide: step 1/1. The sequence is that of Nicotinamide-nucleotide adenylyltransferase from Thermococcus kodakarensis (strain ATCC BAA-918 / JCM 12380 / KOD1) (Pyrococcus kodakaraensis (strain KOD1)).